The following is a 120-amino-acid chain: NAD(P)H-quinone oxidoreductase subunit 3, chloroplastic (120 aa).

3 helical membrane-spanning segments follow: residues 9–29 (IFWAFLMISSVIPILAFLISG), 64–84 (MFALVFVVFDVETVFLYPWAV), and 88–108 (ILGVYVFIEALIFVLIPVVGS).

Belongs to the complex I subunit 3 family. NDH is composed of at least 16 different subunits, 5 of which are encoded in the nucleus.

It localises to the plastid. The protein resides in the chloroplast thylakoid membrane. It carries out the reaction a plastoquinone + NADH + (n+1) H(+)(in) = a plastoquinol + NAD(+) + n H(+)(out). The enzyme catalyses a plastoquinone + NADPH + (n+1) H(+)(in) = a plastoquinol + NADP(+) + n H(+)(out). NDH shuttles electrons from NAD(P)H:plastoquinone, via FMN and iron-sulfur (Fe-S) centers, to quinones in the photosynthetic chain and possibly in a chloroplast respiratory chain. The immediate electron acceptor for the enzyme in this species is believed to be plastoquinone. Couples the redox reaction to proton translocation, and thus conserves the redox energy in a proton gradient. This is NAD(P)H-quinone oxidoreductase subunit 3, chloroplastic from Nymphaea alba (White water-lily).